Consider the following 476-residue polypeptide: 3-isopropylmalate dehydratase large subunit (476 aa).

The [4Fe-4S] cluster site is built by Cys-347, Cys-407, and Cys-410. The interval 418–442 (LAPGERSASTSNRNFEGRQGKGGRT) is disordered.

It belongs to the aconitase/IPM isomerase family. LeuC type 1 subfamily. As to quaternary structure, heterodimer of LeuC and LeuD. [4Fe-4S] cluster is required as a cofactor.

The enzyme catalyses (2R,3S)-3-isopropylmalate = (2S)-2-isopropylmalate. Its pathway is amino-acid biosynthesis; L-leucine biosynthesis; L-leucine from 3-methyl-2-oxobutanoate: step 2/4. Its function is as follows. Catalyzes the isomerization between 2-isopropylmalate and 3-isopropylmalate, via the formation of 2-isopropylmaleate. The protein is 3-isopropylmalate dehydratase large subunit of Streptomyces coelicolor (strain ATCC BAA-471 / A3(2) / M145).